We begin with the raw amino-acid sequence, 498 residues long: ATP synthase subunit beta, chloroplastic (498 aa).

172–179 (GGAGVGKT) provides a ligand contact to ATP.

It belongs to the ATPase alpha/beta chains family. In terms of assembly, F-type ATPases have 2 components, CF(1) - the catalytic core - and CF(0) - the membrane proton channel. CF(1) has five subunits: alpha(3), beta(3), gamma(1), delta(1), epsilon(1). CF(0) has four main subunits: a(1), b(1), b'(1) and c(9-12).

The protein resides in the plastid. It is found in the chloroplast thylakoid membrane. It catalyses the reaction ATP + H2O + 4 H(+)(in) = ADP + phosphate + 5 H(+)(out). In terms of biological role, produces ATP from ADP in the presence of a proton gradient across the membrane. The catalytic sites are hosted primarily by the beta subunits. The chain is ATP synthase subunit beta, chloroplastic from Spinacia oleracea (Spinach).